The primary structure comprises 1809 residues: Pyochelin synthetase PchF (1809 aa).

The segment at 69–490 (FPLTPVQAAY…GLLRRLAQSP (422 aa)) is condensation/cyclization. An adenylation region spans residues 520-915 (FAERALLTPD…GREDDQVKIR (396 aa)). Positions 1407–1488 (APADELESAL…GLAERLRSAP (82 aa)) constitute a Carrier domain. O-(pantetheine 4'-phosphoryl)serine is present on serine 1442. A thioesterase region spans residues 1584–1797 (LGRRYAEALH…FDCLGEALAQ (214 aa)).

This sequence belongs to the NRP synthetase family. Pantetheine 4'-phosphate serves as cofactor.

The catalysed reaction is holo-[peptidyl-carrier protein] + L-cysteine + ATP = L-cysteinyl-[peptidyl-carrier protein] + AMP + diphosphate. The protein operates within siderophore biosynthesis. Its function is as follows. Involved in the biosynthesis of the siderophore pyochelin. Adenylates L-cysteine and loads it onto its peptidyl carrier domain via a thioester linkage to the phosphopanthetheine moiety. Then forms a peptide bond between the salicyl-thiazolinyl intermediate bound to the second carrier domain of PchE and the cysteine bound to its own peptidyl carrier domain to form the salicyl-thiazolinyl-cysteinyl-S-PCP2 intermediate. It subsequently cyclizes the C-terminal cysteine to form the second thiazoline heterocycle in the salicyl-thiazolinyl-thiazolinyl-S-PCP2 intermediate. When this intermediate is released by the action of a thioesterase, it produces the tricyclic acid hydroxyphenyl-thiazolyl-thiazolinyl-carboxylic acid (HPTT-COOH), an advanced intermediate containing the aryl-4,2-bis-heterocyclic skeleton of the bithiazoline class of siderophores. This Pseudomonas aeruginosa (strain UCBPP-PA14) protein is Pyochelin synthetase PchF.